Reading from the N-terminus, the 791-residue chain is Endonuclease MutS2 (791 aa).

Position 339 to 346 (339 to 346 (GPNTGGKT)) interacts with ATP. The region spanning 715–790 (LDLRGERYET…GSGVTIADLK (76 aa)) is the Smr domain.

The protein belongs to the DNA mismatch repair MutS family. MutS2 subfamily. Homodimer. Binds to stalled ribosomes, contacting rRNA.

Endonuclease that is involved in the suppression of homologous recombination and thus may have a key role in the control of bacterial genetic diversity. In terms of biological role, acts as a ribosome collision sensor, splitting the ribosome into its 2 subunits. Detects stalled/collided 70S ribosomes which it binds and splits by an ATP-hydrolysis driven conformational change. Acts upstream of the ribosome quality control system (RQC), a ribosome-associated complex that mediates the extraction of incompletely synthesized nascent chains from stalled ribosomes and their subsequent degradation. Probably generates substrates for RQC. The chain is Endonuclease MutS2 from Halothermothrix orenii (strain H 168 / OCM 544 / DSM 9562).